The primary structure comprises 157 residues: 3-dehydroquinate dehydratase (157 aa).

Residue Y22 is the Proton acceptor of the active site. Substrate contacts are provided by N73, H79, and D86. H99 (proton donor) is an active-site residue. Substrate contacts are provided by residues 100–101 and R110; that span reads LS.

It belongs to the type-II 3-dehydroquinase family. As to quaternary structure, homododecamer.

The enzyme catalyses 3-dehydroquinate = 3-dehydroshikimate + H2O. The protein operates within metabolic intermediate biosynthesis; chorismate biosynthesis; chorismate from D-erythrose 4-phosphate and phosphoenolpyruvate: step 3/7. Functionally, catalyzes a trans-dehydration via an enolate intermediate. This Roseiflexus castenholzii (strain DSM 13941 / HLO8) protein is 3-dehydroquinate dehydratase.